Consider the following 121-residue polypeptide: MTQSTEDTLLRLAGVIDSRKGGDPEQSYVSRLFHKGDDAVLKKIGEEATEVVLAAKDVRQGGAPSALVGEVADLWFHCLVMLSHFDLSPADVIAELERREGLSGIEEKALRKRREREANGG.

This sequence belongs to the PRA-PH family.

It is found in the cytoplasm. It catalyses the reaction 1-(5-phospho-beta-D-ribosyl)-ATP + H2O = 1-(5-phospho-beta-D-ribosyl)-5'-AMP + diphosphate + H(+). The protein operates within amino-acid biosynthesis; L-histidine biosynthesis; L-histidine from 5-phospho-alpha-D-ribose 1-diphosphate: step 2/9. The polypeptide is Phosphoribosyl-ATP pyrophosphatase (Burkholderia multivorans (strain ATCC 17616 / 249)).